Reading from the N-terminus, the 693-residue chain is Polyribonucleotide nucleotidyltransferase (693 aa).

Positions 489 and 495 each coordinate Mg(2+). The 60-residue stretch at 556-615 folds into the KH domain; the sequence is PQIHVMNINPAKIKDVVGRGGATVKGIVEKTGAQIDTSDSGEVKVFAKDKKSMDMAVAMI. The S1 motif domain maps to 625 to 693; the sequence is GQVYKGKIVK…GRVKLSLVAR (69 aa).

The protein belongs to the polyribonucleotide nucleotidyltransferase family. As to quaternary structure, component of the RNA degradosome, which is a multiprotein complex involved in RNA processing and mRNA degradation. Mg(2+) is required as a cofactor.

It is found in the cytoplasm. The enzyme catalyses RNA(n+1) + phosphate = RNA(n) + a ribonucleoside 5'-diphosphate. In terms of biological role, involved in mRNA degradation. Catalyzes the phosphorolysis of single-stranded polyribonucleotides processively in the 3'- to 5'-direction. The chain is Polyribonucleotide nucleotidyltransferase from Francisella tularensis subsp. tularensis (strain FSC 198).